The sequence spans 312 residues: tRNA uridine(34) hydroxylase (312 aa).

The Rhodanese domain occupies 130-225 (RGDDVVFFDG…YGEKYGNDGL (96 aa)). Residue cysteine 185 is the Cysteine persulfide intermediate of the active site.

Belongs to the TrhO family.

It catalyses the reaction uridine(34) in tRNA + AH2 + O2 = 5-hydroxyuridine(34) in tRNA + A + H2O. In terms of biological role, catalyzes oxygen-dependent 5-hydroxyuridine (ho5U) modification at position 34 in tRNAs. This chain is tRNA uridine(34) hydroxylase, found in Corynebacterium diphtheriae (strain ATCC 700971 / NCTC 13129 / Biotype gravis).